The following is a 292-amino-acid chain: 33 kDa chaperonin (292 aa).

Cystine bridges form between Cys237-Cys239 and Cys270-Cys273.

It belongs to the HSP33 family. Post-translationally, under oxidizing conditions two disulfide bonds are formed involving the reactive cysteines. Under reducing conditions zinc is bound to the reactive cysteines and the protein is inactive.

It is found in the cytoplasm. Redox regulated molecular chaperone. Protects both thermally unfolding and oxidatively damaged proteins from irreversible aggregation. Plays an important role in the bacterial defense system toward oxidative stress. The sequence is that of 33 kDa chaperonin from Lachnoclostridium phytofermentans (strain ATCC 700394 / DSM 18823 / ISDg) (Clostridium phytofermentans).